The following is a 72-amino-acid chain: ATP synthase subunit c (72 aa).

2 consecutive transmembrane segments (helical) span residues 1–21 (MSLG…GAGI) and 48–68 (MFIG…FSFI).

This sequence belongs to the ATPase C chain family. As to quaternary structure, F-type ATPases have 2 components, F(1) - the catalytic core - and F(0) - the membrane proton channel. F(1) has five subunits: alpha(3), beta(3), gamma(1), delta(1), epsilon(1). F(0) has three main subunits: a(1), b(2) and c(10-14). The alpha and beta chains form an alternating ring which encloses part of the gamma chain. F(1) is attached to F(0) by a central stalk formed by the gamma and epsilon chains, while a peripheral stalk is formed by the delta and b chains.

Its subcellular location is the cell membrane. Functionally, f(1)F(0) ATP synthase produces ATP from ADP in the presence of a proton or sodium gradient. F-type ATPases consist of two structural domains, F(1) containing the extramembraneous catalytic core and F(0) containing the membrane proton channel, linked together by a central stalk and a peripheral stalk. During catalysis, ATP synthesis in the catalytic domain of F(1) is coupled via a rotary mechanism of the central stalk subunits to proton translocation. Its function is as follows. Key component of the F(0) channel; it plays a direct role in translocation across the membrane. A homomeric c-ring of between 10-14 subunits forms the central stalk rotor element with the F(1) delta and epsilon subunits. This Geobacillus kaustophilus (strain HTA426) protein is ATP synthase subunit c.